Consider the following 265-residue polypeptide: 2-C-methyl-D-erythritol 4-phosphate cytidylyltransferase (265 aa).

The span at 231-241 (DRGGASREAER) shows a compositional bias: basic and acidic residues. The tract at residues 231 to 265 (DRGGASREAERSAMPSAATSVFSGARSAASGSEEV) is disordered. Residues 253–265 (SGARSAASGSEEV) show a composition bias toward low complexity.

The protein belongs to the IspD/TarI cytidylyltransferase family. IspD subfamily.

The catalysed reaction is 2-C-methyl-D-erythritol 4-phosphate + CTP + H(+) = 4-CDP-2-C-methyl-D-erythritol + diphosphate. It participates in isoprenoid biosynthesis; isopentenyl diphosphate biosynthesis via DXP pathway; isopentenyl diphosphate from 1-deoxy-D-xylulose 5-phosphate: step 2/6. Its function is as follows. Catalyzes the formation of 4-diphosphocytidyl-2-C-methyl-D-erythritol from CTP and 2-C-methyl-D-erythritol 4-phosphate (MEP). The sequence is that of 2-C-methyl-D-erythritol 4-phosphate cytidylyltransferase from Xanthomonas campestris pv. campestris (strain B100).